The primary structure comprises 254 residues: Small ribosomal subunit protein uS2 (254 aa).

This sequence belongs to the universal ribosomal protein uS2 family.

In Legionella pneumophila (strain Corby), this protein is Small ribosomal subunit protein uS2.